Consider the following 574-residue polypeptide: E3 ubiquitin-protein ligase TRIM23 (574 aa).

The RING-type; degenerate zinc finger occupies 31–76 (CGVCEDVFSLQGDKVPRLLLCGHTVCHDCLTRLPLHGRAIRCPFDR). Residues 122–168 (ESIIRCDEDEAHLASVYCTVCATHLCSECSQVTHSTKTLAKHRRVPL) form a B box-type; degenerate zinc finger. Positions 352-379 (RVVLAKQEITRLLETLQKQQQQFTEVAD) form a coiled coil. An ARF-like region spans residues 390-574 (TFTKDNRVHI…LVAAGVLDVA (185 aa)). GTP-binding positions include 411–418 (GLDGAGKT), 454–458 (DVGGK), and 513–516 (NKQD).

It in the C-terminal section; belongs to the small GTPase superfamily. Arf family. Homodimer. Interacts with PSCD1. Interacts with UBE2D2. Interacts with TBK1 (via N-terminal kinase domain) and p62/SQSTM1. In terms of assembly, (Microbial infection) Interacts with human cytomegalovirus protein UL144; this interaction might cause autoubiquitination of TRAF6, leading to NF-kappa-B activation.

It localises to the cytoplasm. It is found in the endomembrane system. Its subcellular location is the golgi apparatus membrane. The protein localises to the lysosome membrane. The enzyme catalyses S-ubiquitinyl-[E2 ubiquitin-conjugating enzyme]-L-cysteine + [acceptor protein]-L-lysine = [E2 ubiquitin-conjugating enzyme]-L-cysteine + N(6)-ubiquitinyl-[acceptor protein]-L-lysine.. The protein operates within protein modification; protein ubiquitination. Functionally, acts as an E3 ubiquitin-protein ligase. Plays an essential role in autophagy activation during viral infection. Mechanistically, activates TANK-binding kinase 1/TBK1 by facilitating its dimerization and ability to phosphorylate the selective autophagy receptor SQSTM1. In order to achieve this function, TRIM23 mediates 'Lys-27'-linked auto-ubiquitination of its ADP-ribosylation factor (ARF) domain to induce its GTPase activity and its recruitment to autophagosomes. In terms of biological role, (Microbial infection) Mediates TRAF6 auto-ubiquitination in the presence of human cytomegalovirus protein UL144, resulting in the virally controlled activation of NF-kappa-B stimulation at early times of HCMV infection. This is E3 ubiquitin-protein ligase TRIM23 (TRIM23) from Homo sapiens (Human).